A 299-amino-acid chain; its full sequence is ATP phosphoribosyltransferase (299 aa).

The protein belongs to the ATP phosphoribosyltransferase family. Long subfamily. As to quaternary structure, equilibrium between an active dimeric form, an inactive hexameric form and higher aggregates. Interconversion between the various forms is largely reversible and is influenced by the natural substrates and inhibitors of the enzyme. It depends on Mg(2+) as a cofactor.

The protein resides in the cytoplasm. The catalysed reaction is 1-(5-phospho-beta-D-ribosyl)-ATP + diphosphate = 5-phospho-alpha-D-ribose 1-diphosphate + ATP. The protein operates within amino-acid biosynthesis; L-histidine biosynthesis; L-histidine from 5-phospho-alpha-D-ribose 1-diphosphate: step 1/9. Feedback inhibited by histidine. In terms of biological role, catalyzes the condensation of ATP and 5-phosphoribose 1-diphosphate to form N'-(5'-phosphoribosyl)-ATP (PR-ATP). Has a crucial role in the pathway because the rate of histidine biosynthesis seems to be controlled primarily by regulation of HisG enzymatic activity. The polypeptide is ATP phosphoribosyltransferase (Sodalis glossinidius (strain morsitans)).